Reading from the N-terminus, the 582-residue chain is UPF0329 protein ECU07_0070 (582 aa).

A disordered region spans residues 326 to 386 (EEKAKSKKKG…KTGKKSKGDQ (61 aa)). Residues 330–339 (KSKKKGKKKS) are compositionally biased toward basic residues. The segment covering 344-354 (EAKEEEKKESG) has biased composition (basic and acidic residues).

Belongs to the UPF0329 family.

In Encephalitozoon cuniculi (strain GB-M1) (Microsporidian parasite), this protein is UPF0329 protein ECU07_0070.